The chain runs to 349 residues: Micronemal protein 6 (349 aa).

The signal sequence occupies residues 1-23; sequence MRLFRCCAAAVVAAESLLWLKNG. EGF-like domains lie at 36-80, 96-134, and 147-192; these read IADN…VTCM, TPAA…SLDG, and GCEE…ITCK. Disulfide bonds link C40–C53, C45–C62, C64–C79, C100–C113, C105–C122, C124–C140, C148–C162, C153–C173, and C175–C191. The disordered stretch occupies residues 194-291; that stretch reads VPPHYRKPPF…EEGSGHAGAI (98 aa). Residues 204–283 form an acidic domain region; that stretch reads EFGKGGHPVD…SEEQGKEREE (80 aa). 2 stretches are compositionally biased toward basic and acidic residues: residues 210–247 and 276–285; these read HPVD…RTPL and EQGKEREEGS. The helical transmembrane segment at 290–310 threads the bilayer; sequence AIAGGVIGGLLLLSAAGAGVA.

In terms of assembly, interacts directly with MIC1. Part of the MIC6-MIC1-MIC4 complex. Post-translationally, subject to proteolytic processing involving both the N-terminus and the C-terminus. The first EGF-like domain (EGF-like domain 1) is removed by proteolytic cleavage by ASP3 and is not present in the mature protein. Released as soluble 35 kDa protein after proteolytic processing at the C-terminus.

It localises to the cytoplasmic vesicle. It is found in the secretory vesicle. The protein resides in the microneme membrane. The protein localises to the secreted. Escorter protein required for import of MIC1 and MIC4 adhesins into the microneme. The polypeptide is Micronemal protein 6 (Toxoplasma gondii).